Here is a 342-residue protein sequence, read N- to C-terminus: Dihydroorotase (342 aa).

Zn(2+) contacts are provided by H13 and H15. Substrate is bound by residues 15-17 and N41; that span reads HLR. K98, H135, and H173 together coordinate Zn(2+). Residue K98 is modified to N6-carboxylysine. H135 is a binding site for substrate. Residue L218 participates in substrate binding. D246 serves as a coordination point for Zn(2+). Residue D246 is part of the active site. Substrate contacts are provided by H250 and A262.

The protein belongs to the metallo-dependent hydrolases superfamily. DHOase family. Class II DHOase subfamily. Homodimer. Requires Zn(2+) as cofactor.

The enzyme catalyses (S)-dihydroorotate + H2O = N-carbamoyl-L-aspartate + H(+). The protein operates within pyrimidine metabolism; UMP biosynthesis via de novo pathway; (S)-dihydroorotate from bicarbonate: step 3/3. Its function is as follows. Catalyzes the reversible cyclization of carbamoyl aspartate to dihydroorotate. This is Dihydroorotase from Aliivibrio fischeri (strain MJ11) (Vibrio fischeri).